The chain runs to 663 residues: tRNA (guanine(26)-N(2))-dimethyltransferase (663 aa).

The transit peptide at 1 to 16 (MSLARTILWLSRPLRP) directs the protein to the mitochondrion. Positions 56-498 (ATVTEGAAKI…APPEALWDIM (443 aa)) constitute a Trm1 methyltransferase domain. Residue Arg-83 participates in S-adenosyl-L-methionine binding. The residue at position 121 (Ser-121) is a Phosphoserine. S-adenosyl-L-methionine-binding residues include Arg-165 and Asp-183. Zn(2+) contacts are provided by Cys-347, Cys-350, Cys-383, and Cys-386. Ser-516 bears the Phosphoserine mark. A disordered region spans residues 534–574 (IREDANPSSRQRGLKRFQANPEANWGPRPRARPGGKAASED). Positions 540–572 (PSSRQRGLKRFQANPEANWGPRPRARPGGKAAS) match the Nuclear localization signal motif. The segment at 599–626 (RLKTFPCKRFKEGTCQLGDQCCYSHSPA) adopts a C3H1-type zinc-finger fold. At Ser-624 the chain carries Phosphoserine. The interval 632 to 663 (GDIPIEECPETTTKISPGPKAAAGGIPGPGVD) is disordered.

The protein belongs to the class I-like SAM-binding methyltransferase superfamily. Trm1 family.

It is found in the mitochondrion. The protein localises to the nucleus. It localises to the cytoplasm. The catalysed reaction is guanosine(26) in tRNA + 2 S-adenosyl-L-methionine = N(2)-dimethylguanosine(26) in tRNA + 2 S-adenosyl-L-homocysteine + 2 H(+). In terms of biological role, dimethylates a single guanine residue at position 26 of most nuclear- and mitochondrial-encoded tRNAs using S-adenosyl-L-methionine as donor of the methyl groups. tRNA guanine(26)-dimethylation is required for redox homeostasis and ensure proper cellular proliferation and oxidative stress survival. The protein is tRNA (guanine(26)-N(2))-dimethyltransferase of Mus musculus (Mouse).